Here is a 154-residue protein sequence, read N- to C-terminus: 6,7-dimethyl-8-ribityllumazine synthase (154 aa).

5-amino-6-(D-ribitylamino)uracil is bound by residues Phe22, 57-59 (VCE), and 81-83 (TVI). 86-87 (KT) is a (2S)-2-hydroxy-3-oxobutyl phosphate binding site. His89 acts as the Proton donor in catalysis. Val114 is a 5-amino-6-(D-ribitylamino)uracil binding site. Residue Arg128 participates in (2S)-2-hydroxy-3-oxobutyl phosphate binding.

This sequence belongs to the DMRL synthase family. As to quaternary structure, forms an icosahedral capsid composed of 60 subunits, arranged as a dodecamer of pentamers.

The catalysed reaction is (2S)-2-hydroxy-3-oxobutyl phosphate + 5-amino-6-(D-ribitylamino)uracil = 6,7-dimethyl-8-(1-D-ribityl)lumazine + phosphate + 2 H2O + H(+). Its pathway is cofactor biosynthesis; riboflavin biosynthesis; riboflavin from 2-hydroxy-3-oxobutyl phosphate and 5-amino-6-(D-ribitylamino)uracil: step 1/2. Functionally, catalyzes the formation of 6,7-dimethyl-8-ribityllumazine by condensation of 5-amino-6-(D-ribitylamino)uracil with 3,4-dihydroxy-2-butanone 4-phosphate. This is the penultimate step in the biosynthesis of riboflavin. This chain is 6,7-dimethyl-8-ribityllumazine synthase, found in Wigglesworthia glossinidia brevipalpis.